We begin with the raw amino-acid sequence, 801 residues long: Phenylalanine--tRNA ligase beta subunit (801 aa).

The 115-residue stretch at 39 to 153 (AEGLSKLVVG…EDAVPGESIF (115 aa)) folds into the tRNA-binding domain. One can recognise a B5 domain in the interval 406–481 (TDDIQVSTSL…RIYGYDKLPT (76 aa)). 4 residues coordinate Mg(2+): Asp459, Asp465, Glu468, and Glu469. Residues 708–801 (TKFPAVSRDI…LTEKVGAEVR (94 aa)) enclose the FDX-ACB domain.

It belongs to the phenylalanyl-tRNA synthetase beta subunit family. Type 1 subfamily. As to quaternary structure, tetramer of two alpha and two beta subunits. Mg(2+) serves as cofactor.

It is found in the cytoplasm. The catalysed reaction is tRNA(Phe) + L-phenylalanine + ATP = L-phenylalanyl-tRNA(Phe) + AMP + diphosphate + H(+). This is Phenylalanine--tRNA ligase beta subunit from Streptococcus mutans serotype c (strain ATCC 700610 / UA159).